The primary structure comprises 197 residues: Phosphoheptose isomerase (197 aa).

Residues Met34–Gln196 form the SIS domain. Residue Asn49 to Gly51 coordinates substrate. 2 residues coordinate Zn(2+): His58 and Glu62. Residues Glu62, Asn91 to Asp92, Ser117 to Ser119, Ser122, and Gln172 contribute to the substrate site. 2 residues coordinate Zn(2+): Gln172 and His180.

It belongs to the SIS family. GmhA subfamily. Homotetramer. Requires Zn(2+) as cofactor.

The protein resides in the cytoplasm. The enzyme catalyses 2 D-sedoheptulose 7-phosphate = D-glycero-alpha-D-manno-heptose 7-phosphate + D-glycero-beta-D-manno-heptose 7-phosphate. It functions in the pathway carbohydrate biosynthesis; D-glycero-D-manno-heptose 7-phosphate biosynthesis; D-glycero-alpha-D-manno-heptose 7-phosphate and D-glycero-beta-D-manno-heptose 7-phosphate from sedoheptulose 7-phosphate: step 1/1. Functionally, catalyzes the isomerization of sedoheptulose 7-phosphate in D-glycero-D-manno-heptose 7-phosphate. The polypeptide is Phosphoheptose isomerase (Shewanella sediminis (strain HAW-EB3)).